The following is a 97-amino-acid chain: Citrate lyase acyl carrier protein (97 aa).

Serine 14 carries the O-(phosphoribosyl dephospho-coenzyme A)serine modification.

The protein belongs to the CitD family. As to quaternary structure, oligomer with a subunit composition of (alpha,beta,gamma)6.

The protein resides in the cytoplasm. In terms of biological role, covalent carrier of the coenzyme of citrate lyase. The protein is Citrate lyase acyl carrier protein of Klebsiella pneumoniae subsp. pneumoniae (strain ATCC 700721 / MGH 78578).